The chain runs to 334 residues: Beta-1,3-N-acetylglucosaminyltransferase radical fringe (334 aa).

At 1 to 6 the chain is on the cytoplasmic side; that stretch reads MSRVRR. A helical; Signal-anchor for type II membrane protein membrane pass occupies residues 7-29; it reads VLCRACLALAAVLAVLLLLPLPL. Residues 30 to 334 lie on the Lumenal side of the membrane; sequence PLPLPLPRAP…MKNRGKEAFQ (305 aa). Substrate is bound at residue arginine 77. A glycan (N-linked (GlcNAc...) asparagine) is linked at asparagine 116. Cystine bridges form between cysteine 117/cysteine 128 and cysteine 146/cysteine 210. Aspartate 150 serves as a coordination point for substrate. Aspartate 151 lines the Mn(2+) pocket. Residue aspartate 240 is part of the active site. Mn(2+) is bound at residue histidine 264. An intrachain disulfide couples cysteine 314 to cysteine 323.

Belongs to the glycosyltransferase 31 family. Mn(2+) serves as cofactor. Most abundantly expressed in adult brain. Expressed in most neurons of the brain but not in glial cells. Also detected to a lower extent in adult lung and kidney.

It localises to the golgi apparatus membrane. It catalyses the reaction 3-O-(alpha-L-fucosyl)-L-threonyl-[EGF-like domain protein] + UDP-N-acetyl-alpha-D-glucosamine = 3-O-(N-acetyl-beta-D-glucosaminyl-(1-&gt;3)-alpha-L-fucosyl)-L-threonyl-[EGF-like domain protein] + UDP + H(+). It carries out the reaction 3-O-(alpha-L-fucosyl)-L-seryl-[EGF-like domain protein] + UDP-N-acetyl-alpha-D-glucosamine = 3-O-(N-acetyl-beta-D-glucosaminyl-(1-&gt;3)-alpha-L-fucosyl)-L-seryl-[EGF-like domain protein] + UDP + H(+). Glycosyltransferase that initiates the elongation of O-linked fucose residues attached to EGF-like repeats in the extracellular domain of Notch molecules. Modulates NOTCH1 activity by modifying O-fucose residues at specific EGF-like domains resulting in enhancement of NOTCH1 activation by DLL1 and JAG1. Inhibits Notch signaling in postmitotic neurons of the brain. It may play a role in adult brain and in neurogenesis. It may play a role in limb development. This is Beta-1,3-N-acetylglucosaminyltransferase radical fringe from Rattus norvegicus (Rat).